The sequence spans 273 residues: Hemin import ATP-binding protein HmuV (273 aa).

The 255-residue stretch at 2 to 256 (LTAHHLDVAR…AHIAQCYGFA (255 aa)) folds into the ABC transporter domain. 34–41 (GRNGAGKS) is a binding site for ATP.

It belongs to the ABC transporter superfamily. Heme (hemin) importer (TC 3.A.1.14.5) family. As to quaternary structure, the complex is composed of two ATP-binding proteins (HmuV), two transmembrane proteins (HmuU) and a solute-binding protein (HmuT).

It localises to the cell inner membrane. Part of the ABC transporter complex HmuTUV involved in hemin import. Responsible for energy coupling to the transport system. The polypeptide is Hemin import ATP-binding protein HmuV (Burkholderia ambifaria (strain ATCC BAA-244 / DSM 16087 / CCUG 44356 / LMG 19182 / AMMD) (Burkholderia cepacia (strain AMMD))).